The sequence spans 365 residues: Aspartate-semialdehyde dehydrogenase (365 aa).

Residues Thr-15, Gly-16, Thr-17, Val-18, Ser-40, Ser-43, Leu-89, and Asp-90 each contribute to the NADP(+) site. Catalysis depends on Cys-156, which acts as the Acyl-thioester intermediate. Gly-188 contacts NADP(+). His-255 acts as the Proton acceptor in catalysis. Asn-342 serves as a coordination point for NADP(+).

Belongs to the aspartate-semialdehyde dehydrogenase family. As to quaternary structure, homotetramer; dimer of dimers.

The protein localises to the cytoplasm. It is found in the cytosol. Its subcellular location is the nucleus. It catalyses the reaction L-aspartate 4-semialdehyde + phosphate + NADP(+) = 4-phospho-L-aspartate + NADPH + H(+). It participates in amino-acid biosynthesis; L-methionine biosynthesis via de novo pathway; L-homoserine from L-aspartate: step 2/3. Its pathway is amino-acid biosynthesis; L-threonine biosynthesis; L-threonine from L-aspartate: step 2/5. Inhibited by the competitive inhibitor 1,4-benzoquinone and derivates such as 2-chloro-3-methoxy-1,4-naphthoquinone, 2,3-dichloro-1,4-naphthoquinone, 2-chloro-1,4-naphthoquinone, 2-bromo-1,4-naphthoquinone and 2,3-dichloro-5,8-dihydroxy-1,4-naphthoquinone. Its function is as follows. Catalyzes the NADPH-dependent formation of L-aspartate 4-semialdehyde (L-ASA) by the reductive dephosphorylation of 4-phospho-L-aspartate. Mediates the second step in the biosynthesis of amino acids that derive from aspartate (the aspartate family of amino acids), including methioinine and threonine, the latter of which is a precursor to isoleucine. The polypeptide is Aspartate-semialdehyde dehydrogenase (Cryptococcus neoformans var. neoformans serotype D (strain JEC21 / ATCC MYA-565) (Filobasidiella neoformans)).